The sequence spans 338 residues: Uroporphyrinogen decarboxylase (338 aa).

Residues 23-27 (RQAGR), Asp-72, Tyr-146, Thr-201, and His-312 each bind substrate.

The protein belongs to the uroporphyrinogen decarboxylase family. In terms of assembly, homodimer.

It localises to the cytoplasm. It carries out the reaction uroporphyrinogen III + 4 H(+) = coproporphyrinogen III + 4 CO2. It functions in the pathway porphyrin-containing compound metabolism; protoporphyrin-IX biosynthesis; coproporphyrinogen-III from 5-aminolevulinate: step 4/4. Its function is as follows. Catalyzes the decarboxylation of four acetate groups of uroporphyrinogen-III to yield coproporphyrinogen-III. In Thermodesulfovibrio yellowstonii (strain ATCC 51303 / DSM 11347 / YP87), this protein is Uroporphyrinogen decarboxylase.